The primary structure comprises 324 residues: Beta-ketoacyl-[acyl-carrier-protein] synthase III (324 aa).

Active-site residues include cysteine 112 and histidine 249. Residues 250–254 (QANRR) are ACP-binding. Residue asparagine 279 is part of the active site.

This sequence belongs to the thiolase-like superfamily. FabH family. As to quaternary structure, homodimer.

It localises to the cytoplasm. The catalysed reaction is malonyl-[ACP] + acetyl-CoA + H(+) = 3-oxobutanoyl-[ACP] + CO2 + CoA. The protein operates within lipid metabolism; fatty acid biosynthesis. Catalyzes the condensation reaction of fatty acid synthesis by the addition to an acyl acceptor of two carbons from malonyl-ACP. Catalyzes the first condensation reaction which initiates fatty acid synthesis and may therefore play a role in governing the total rate of fatty acid production. Possesses both acetoacetyl-ACP synthase and acetyl transacylase activities. Its substrate specificity determines the biosynthesis of branched-chain and/or straight-chain of fatty acids. The polypeptide is Beta-ketoacyl-[acyl-carrier-protein] synthase III (Streptococcus equi subsp. equi (strain 4047)).